The sequence spans 235 residues: Flavonoid 3',5'-methyltransferase (235 aa).

Residues valine 51, glutamate 73, 75-76 (GV), serine 81, aspartate 99, and alanine 128 each bind S-adenosyl-L-methionine. Position 151 (aspartate 151) interacts with a divalent metal cation. Aspartate 153 lines the S-adenosyl-L-methionine pocket. A divalent metal cation-binding residues include aspartate 177 and asparagine 178.

It belongs to the class I-like SAM-binding methyltransferase superfamily. Cation-dependent O-methyltransferase family. CCoAMT subfamily. Requires a divalent metal cation as cofactor.

The protein localises to the cytoplasm. It catalyses the reaction S-adenosyl-L-methionine + a 3'-hydroxyflavonoid = S-adenosyl-L-homocysteine + a 3'-methoxyflavonoid.. The catalysed reaction is S-adenosyl-L-methionine + a 5'-hydroxy-3'-methoxyflavonoid = S-adenosyl-L-homocysteine + a 3',5'-dimethoxyflavonoid.. It participates in pigment biosynthesis; anthocyanin biosynthesis. Its function is as follows. Mediates O-methylation of anthocyanins. Anthocyanins are major pigments in grapes: at ripening initiation in red grapevine berries, the exocarp turns color from green to red and then to purple due to the accumulation and extent of methylation of anthocyanins. Catalyzes both 3' and 5' O-methylation of anthocyanins, with a preference for glycosylated substrates. Active on both anthocyanins and flavonols in vitro. Most active with delphinidin 3-glucoside but also acts on cyanidin 3-glucoside, cyanidin, myricetin, quercetin and quercetin 3-glucoside. Not able to methylate flavan type skeletons with chiral centers, such as catechins or dihydroquercetin. The sequence is that of Flavonoid 3',5'-methyltransferase (FAOMT) from Vitis vinifera (Grape).